Reading from the N-terminus, the 254-residue chain is tRNA (guanine-N(7)-)-methyltransferase (254 aa).

The disordered stretch occupies residues 1-34 (MNTNTPAHPPEGAPLSEATQAALASAEHAPDSPG). The S-adenosyl-L-methionine site is built by Glu87, Glu112, Asp139, and Asp162. Asp162 is an active-site residue. Residues Lys166, Asp198, and 233–236 (TKFE) contribute to the substrate site.

The protein belongs to the class I-like SAM-binding methyltransferase superfamily. TrmB family.

It carries out the reaction guanosine(46) in tRNA + S-adenosyl-L-methionine = N(7)-methylguanosine(46) in tRNA + S-adenosyl-L-homocysteine. It functions in the pathway tRNA modification; N(7)-methylguanine-tRNA biosynthesis. In terms of biological role, catalyzes the formation of N(7)-methylguanine at position 46 (m7G46) in tRNA. In Bordetella pertussis (strain Tohama I / ATCC BAA-589 / NCTC 13251), this protein is tRNA (guanine-N(7)-)-methyltransferase.